Reading from the N-terminus, the 356-residue chain is Dynein axonemal heavy chain 12 (356 aa).

ANK repeat units follow at residues 17-46 (DSSS…DANV), 50-81 (SGHL…AIKR), 82-111 (SGIS…DVNF), 124-153 (HRKS…MPNQ), 154-183 (DPVN…NVNY), and 185-218 (CRVN…DTEL). In terms of domain architecture, SOCS box spans 290-345 (WSEIHFILTNPRSLKHLCRLKIRKCMGRLRLRCPVFMSFLPLPSRLKAYVLYKEYD).

The protein belongs to the dynein heavy chain family. Consists of at least two heavy chains and a number of intermediate and light chains.

The protein localises to the cytoplasm. Its subcellular location is the cytoskeleton. It localises to the cilium axoneme. The protein operates within protein modification; protein ubiquitination. Functionally, force generating protein of respiratory cilia. Produces force towards the minus ends of microtubules. Dynein has ATPase activity; the force-producing power stroke is thought to occur on release of ADP. Involved in sperm motility; implicated in sperm flagellar assembly. May be a substrate-recognition component of a SCF-like ECS (Elongin-Cullin-SOCS-box protein) E3 ubiquitin-protein ligase complex which mediates the ubiquitination and subsequent proteasomal degradation of target proteins. This is Dynein axonemal heavy chain 12 (DNAH12) from Bos taurus (Bovine).